The following is a 146-amino-acid chain: uncharacterized protein (146 aa).

One can recognise an HTH marR-type domain in the interval 1–137; the sequence is MLSQEFFNSF…TINVMNQIHK (137 aa).

This is an uncharacterized protein from Staphylococcus aureus (strain MW2).